The following is a 485-amino-acid chain: Protein DETOXIFICATION 8 (485 aa).

Residues 1-26 (MENGFSLVPKEEEEEEDYSNEKSEDQ) are disordered. Helical transmembrane passes span 41–61 (FMAA…VISI), 74–94 (AVAI…FGLA), 118–138 (YGSM…WVFM), 159–179 (SIWL…TRFF), 188–208 (LFLS…LLVY), 212–232 (FGIV…VGLL), 263–283 (LAIP…LLIL), 297–317 (VLSI…AIGA), 338–358 (AANS…ISLY), 381–401 (ITPF…LSGV), 414–434 (ANIG…CFVV), and 442–462 (WIGI…VTFF).

This sequence belongs to the multi antimicrobial extrusion (MATE) (TC 2.A.66.1) family.

It is found in the membrane. This chain is Protein DETOXIFICATION 8, found in Arabidopsis thaliana (Mouse-ear cress).